The primary structure comprises 323 residues: tRNA dimethylallyltransferase (323 aa).

12 to 19 contacts ATP; it reads GPTAAGKT. Substrate is bound at residue 14–19; sequence TAAGKT. 2 interaction with substrate tRNA regions span residues 37–40 and 161–165; these read DSAL and QRLSR.

This sequence belongs to the IPP transferase family. In terms of assembly, monomer. Requires Mg(2+) as cofactor.

The enzyme catalyses adenosine(37) in tRNA + dimethylallyl diphosphate = N(6)-dimethylallyladenosine(37) in tRNA + diphosphate. Catalyzes the transfer of a dimethylallyl group onto the adenine at position 37 in tRNAs that read codons beginning with uridine, leading to the formation of N6-(dimethylallyl)adenosine (i(6)A). The protein is tRNA dimethylallyltransferase of Pseudomonas fluorescens (strain SBW25).